The chain runs to 207 residues: ATP synthase subunit b 2 (207 aa).

Residues 53–72 form a helical membrane-spanning segment; the sequence is TYASQLLWLVITFGVFYLLM.

The protein belongs to the ATPase B chain family. In terms of assembly, F-type ATPases have 2 components, F(1) - the catalytic core - and F(0) - the membrane proton channel. F(1) has five subunits: alpha(3), beta(3), gamma(1), delta(1), epsilon(1). F(0) has three main subunits: a(1), b(2) and c(10-14). The alpha and beta chains form an alternating ring which encloses part of the gamma chain. F(1) is attached to F(0) by a central stalk formed by the gamma and epsilon chains, while a peripheral stalk is formed by the delta and b chains.

The protein resides in the cell inner membrane. Its function is as follows. F(1)F(0) ATP synthase produces ATP from ADP in the presence of a proton or sodium gradient. F-type ATPases consist of two structural domains, F(1) containing the extramembraneous catalytic core and F(0) containing the membrane proton channel, linked together by a central stalk and a peripheral stalk. During catalysis, ATP synthesis in the catalytic domain of F(1) is coupled via a rotary mechanism of the central stalk subunits to proton translocation. Functionally, component of the F(0) channel, it forms part of the peripheral stalk, linking F(1) to F(0). The b'-subunit is a diverged and duplicated form of b found in plants and photosynthetic bacteria. This chain is ATP synthase subunit b 2 (atpF2), found in Rhizobium etli (strain ATCC 51251 / DSM 11541 / JCM 21823 / NBRC 15573 / CFN 42).